A 303-amino-acid polypeptide reads, in one-letter code: Propanal dehydrogenase (CoA-propanoylating) (303 aa).

12–15 (SGNI) is a binding site for NAD(+). The active-site Acyl-thioester intermediate is the cysteine 127. Residues 158 to 166 (SAGPGTRAN) and asparagine 277 contribute to the NAD(+) site.

This sequence belongs to the acetaldehyde dehydrogenase family. In terms of assembly, monomer. Forms a heterotetramer composed of two aldolase (HsaF) and two dehydrogenase (HsaG) subunits.

It catalyses the reaction propanal + NAD(+) + CoA = propanoyl-CoA + NADH + H(+). The catalysed reaction is acetaldehyde + NAD(+) + CoA = acetyl-CoA + NADH + H(+). In terms of biological role, involved in cholesterol degradation. Catalyzes the conversion of propanal to propanoyl-CoA, using NAD(+) and coenzyme A. The chain is Propanal dehydrogenase (CoA-propanoylating) from Mycobacterium bovis (strain ATCC BAA-935 / AF2122/97).